Here is a 463-residue protein sequence, read N- to C-terminus: Probable glycosyltransferase 3 (463 aa).

Residues 1-20 (MAVTGGGRPAARQQAARGKQ) form a disordered region. At 1 to 24 (MAVTGGGRPAARQQAARGKQMQRT) the chain is on the cytoplasmic side. Residues 9-20 (PAARQQAARGKQ) show a composition bias toward low complexity. The chain crosses the membrane as a helical; Signal-anchor for type II membrane protein span at residues 25-47 (FNNVKITLICGFITLLVLRGTVG). Over 48–463 (INLLTYGVGG…ALKMDAKIES (416 aa)) the chain is Lumenal. A disordered region spans residues 82–125 (EIRSDTDDDDDDEEEEPLGVDASTTTTTNSTTTTATAARRRSSN). The span at 87 to 99 (TDDDDDDEEEEPL) shows a compositional bias: acidic residues. A compositionally biased stretch (low complexity) spans 103–118 (ASTTTTTNSTTTTATA). Asn-110, Asn-125, and Asn-442 each carry an N-linked (GlcNAc...) asparagine glycan.

The protein belongs to the glycosyltransferase 34 family.

It is found in the golgi apparatus membrane. Probable glycosyltransferase that may be involved in the biosynthesis of xyloglucan. This is Probable glycosyltransferase 3 from Oryza sativa subsp. indica (Rice).